We begin with the raw amino-acid sequence, 215 residues long: UPF0502 protein YceH (215 aa).

At lysine 80 the chain carries N6-acetyllysine.

It belongs to the UPF0502 family.

The protein is UPF0502 protein YceH of Shigella flexneri serotype 5b (strain 8401).